Consider the following 282-residue polypeptide: NADPH-dependent 7-cyano-7-deazaguanine reductase (282 aa).

88-90 (IES) serves as a coordination point for substrate. Residue 90-91 (SK) coordinates NADPH. Catalysis depends on C190, which acts as the Thioimide intermediate. The Proton donor role is filled by D197. 229-230 (HE) contacts substrate. 258-259 (RG) lines the NADPH pocket.

It belongs to the GTP cyclohydrolase I family. QueF type 2 subfamily. Homodimer.

The protein localises to the cytoplasm. The enzyme catalyses 7-aminomethyl-7-carbaguanine + 2 NADP(+) = 7-cyano-7-deazaguanine + 2 NADPH + 3 H(+). It functions in the pathway tRNA modification; tRNA-queuosine biosynthesis. Its function is as follows. Catalyzes the NADPH-dependent reduction of 7-cyano-7-deazaguanine (preQ0) to 7-aminomethyl-7-deazaguanine (preQ1). The protein is NADPH-dependent 7-cyano-7-deazaguanine reductase of Escherichia coli O127:H6 (strain E2348/69 / EPEC).